The primary structure comprises 385 residues: Chaperone protein DnaJ (385 aa).

The 66-residue stretch at 5–70 (DFYDVLGVSR…QSRAAYDQFG (66 aa)) folds into the J domain. The CR-type zinc-finger motif lies at 143–221 (GKKAQVRVPG…CHGAGRVEKE (79 aa)). Zn(2+) contacts are provided by cysteine 156, cysteine 159, cysteine 173, cysteine 176, cysteine 195, cysteine 198, cysteine 209, and cysteine 212. 4 CXXCXGXG motif repeats span residues 156–163 (CEVCTGTG), 173–180 (CPTCQGHG), 195–202 (CPTCHGRG), and 209–216 (CTNCHGAG).

The protein belongs to the DnaJ family. In terms of assembly, homodimer. Zn(2+) serves as cofactor.

It localises to the cytoplasm. Functionally, participates actively in the response to hyperosmotic and heat shock by preventing the aggregation of stress-denatured proteins and by disaggregating proteins, also in an autonomous, DnaK-independent fashion. Unfolded proteins bind initially to DnaJ; upon interaction with the DnaJ-bound protein, DnaK hydrolyzes its bound ATP, resulting in the formation of a stable complex. GrpE releases ADP from DnaK; ATP binding to DnaK triggers the release of the substrate protein, thus completing the reaction cycle. Several rounds of ATP-dependent interactions between DnaJ, DnaK and GrpE are required for fully efficient folding. Also involved, together with DnaK and GrpE, in the DNA replication of plasmids through activation of initiation proteins. In Parvibaculum lavamentivorans (strain DS-1 / DSM 13023 / NCIMB 13966), this protein is Chaperone protein DnaJ.